Here is a 506-residue protein sequence, read N- to C-terminus: Ecdysteroid UDP-glucosyltransferase (506 aa).

The N-terminal stretch at 1–18 is a signal peptide; that stretch reads MTILCWLALLSTLTAVNA.

Belongs to the UDP-glycosyltransferase family. Glycosylated.

Its function is as follows. Catalyzes the transfer of glucose from UDP-glucose to ecdysteroids which are insect molting hormones. Acts on the host at the organismal level to block its development, thereby increasing the yield of progeny virus. The chain is Ecdysteroid UDP-glucosyltransferase (EGT) from Lepidoptera (butterflies and moths).